Reading from the N-terminus, the 1100-residue chain is Collagen alpha-2(I) chain (1100 aa).

Positions 1 to 982 (QYDGVKAPDP…PGPAGGGYDV (982 aa)) are disordered. Composition is skewed to low complexity over residues 122 to 170 (EPGA…AAGP), 200 to 209 (EPGPNGAVGP), and 216 to 237 (PGNN…AGAP). Pro residues predominate over residues 239 to 249 (FPGPRGGPGPQ). Over residues 251–261 (PQGAAGQRGLA) the composition is skewed to low complexity. The segment covering 268–277 (GVKGDGGPKG) has biased composition (gly residues). Composition is skewed to low complexity over residues 333–352 (MPGA…PGDA), 358–385 (SGPA…AGPA), 435–448 (APGP…TGAT), and 460–472 (QGAS…QGLP). Gly residues predominate over residues 473-482 (GPAGGAGEAG). Over residues 507-517 (NPGAAGASGPQ) the composition is skewed to low complexity. A compositionally biased stretch (gly residues) spans 530-557 (GTDGGKGEPGAAGAAGGPGHQGPGGMPG). A compositionally biased stretch (basic and acidic residues) spans 568-579 (KGEKGEGGHRGP). The span at 633-646 (PAGAPGFAGPPGAD) shows a compositional bias: low complexity. The span at 656-665 (GPSGGKGESG) shows a compositional bias: gly residues. 3 stretches are compositionally biased toward low complexity: residues 666 to 691 (PSGP…TGAR), 702 to 729 (FPGA…PAGK), and 757 to 775 (SGEK…LGLQ). The segment covering 788–797 (GSPGGAGAVG) has biased composition (gly residues). Composition is skewed to low complexity over residues 798–820 (EAGR…LGLP) and 854–866 (AGPT…PGNR). Positions 867–876 (GESGPGGAAG) are enriched in gly residues. The span at 877-892 (AVGPAGARGAAGPSGP) shows a compositional bias: low complexity. Basic and acidic residues predominate over residues 893–907 (RGEKGVAGEKGERGM). Over residues 916 to 935 (LQGMPGPSGPSGDTGSAGPN) the composition is skewed to low complexity. The region spanning 1071–1100 (TRLPLLDLAPLDLGGADQEFGLDLGPVCFK) is the Fibrillar collagen NC1 domain.

It belongs to the fibrillar collagen family.

The protein localises to the secreted. The protein resides in the extracellular space. It localises to the extracellular matrix. In Epinephelus caninus (Dogtooth grouper), this protein is Collagen alpha-2(I) chain.